The primary structure comprises 191 residues: Small ribosomal subunit protein uS5 (191 aa).

A disordered region spans residues 1–20; sequence MAAERERGGRERSRDREERD. In terms of domain architecture, S5 DRBM spans 23–86; it reads FVDKLVHINR…EAAKRNLTRV (64 aa).

It belongs to the universal ribosomal protein uS5 family. As to quaternary structure, part of the 30S ribosomal subunit. Contacts proteins S4 and S8.

With S4 and S12 plays an important role in translational accuracy. Functionally, located at the back of the 30S subunit body where it stabilizes the conformation of the head with respect to the body. This is Small ribosomal subunit protein uS5 from Rhodopseudomonas palustris (strain HaA2).